We begin with the raw amino-acid sequence, 421 residues long: POU domain, class 4, transcription factor 1 (421 aa).

The short motif at 57–66 (RAEALAAVDI) is the POU-IV box element. Disordered regions lie at residues 94–117 (STVP…GDLL) and 133–200 (GAGA…GLGH). The span at 99 to 108 (AHHHHHHHHH) shows a compositional bias: basic residues. A compositionally biased stretch (gly residues) spans 133-186 (GAGAAGGGGGAHDGPGGGGGPGGGGGPGGGGPGGGGGGGGPGGGGGGPGGGLLG). A POU-specific domain is found at 262–339 (DSDTDPRELE…ILQAWLEEAE (78 aa)). The homeobox DNA-binding region spans 357-416 (KKRKRTSIAAPEKRSLEAYFAVQPRPSSEKIAAIAEKLDLKKNVVRVWFCNQRQKQKRMK).

The protein belongs to the POU transcription factor family. Class-4 subfamily. Interacts (via N-terminus) with RIT2; the interaction controls POU4F1 transactivation activity on some neuronal target genes. Isoform 1 interacts with POU4F2 isoform 2; this interaction inhibits both POU4F1 DNA-binding and transcriptional activities. Isoform 1 interacts (C-terminus) with ESR1 (via DNA-binding domain); this interaction decreases the estrogen receptor ESR1 transcriptional activity in a DNA- and ligand 17-beta-estradiol-independent manner. Expressed in mature osteoclasts (at protein level). Brain, peripheral sensory nervous system and retina. In the adult nervous system, predominates in the medial habenula, superficial gray of the superior colliculus, red nucleus, mesencephalic nucleus of the trigeminal ganglion, nucleus ambiguus, inferior olivary nucleus, and peripheral sensory ganglia.

The protein resides in the nucleus. Its subcellular location is the cytoplasm. In terms of biological role, multifunctional transcription factor with different regions mediating its different effects. Acts by binding (via its C-terminal domain) to sequences related to the consensus octamer motif 5'-ATGCAAAT-3' in the regulatory regions of its target genes. Regulates the expression of specific genes involved in differentiation and survival within a subset of neuronal lineages. It has been shown that activation of some of these genes requires its N-terminal domain, maybe through a neuronal-specific cofactor. Activates BCL2 expression and protects neuronal cells from apoptosis (via the N-terminal domain). Induces neuronal process outgrowth and the coordinate expression of genes encoding synaptic proteins. Exerts its major developmental effects in somatosensory neurons and in brainstem nuclei involved in motor control. Stimulates the binding affinity of the nuclear estrogene receptor ESR1 to DNA estrogen response element (ERE), and hence modulates ESR1-induced transcriptional activity. May positively regulate POU4F2 and POU4F3. Regulates dorsal root ganglion sensory neuron specification and axonal projection into the spinal cord. Plays a role in TNFSF11-mediated terminal osteoclast differentiation. Negatively regulates its own expression interacting directly with a highly conserved autoregulatory domain surrounding the transcription initiation site. Functionally, able to act as transcription factor, cannot regulate the expression of the same subset of genes than isoform 1. Does not have antiapoptotic effect on neuronal cells. The polypeptide is POU domain, class 4, transcription factor 1 (Pou4f1) (Mus musculus (Mouse)).